The primary structure comprises 285 residues: CCR4-NOT transcription complex subunit 7 (285 aa).

Residues D40, E42, D161, D230, and E278 each contribute to the a divalent metal cation site.

Belongs to the CAF1 family. In terms of assembly, component of the CCR4-NOT complex. Mn(2+) serves as cofactor. Mg(2+) is required as a cofactor. Requires Co(2+) as cofactor.

The protein localises to the nucleus. It localises to the cytoplasm. It catalyses the reaction Exonucleolytic cleavage of poly(A) to 5'-AMP.. Its function is as follows. Has 3'-5' poly(A) exoribonuclease activity for synthetic poly(A) RNA substrate. Catalytic component of the CCR4-NOT complex which is one of the major cellular mRNA deadenylases and is linked to various cellular processes including bulk mRNA degradation, miRNA-mediated repression, translational repression during translational initiation and general transcription regulation. During miRNA-mediated repression the complex also seems to act as translational repressor during translational initiation. Additional complex functions may be a consequence of its influence on mRNA expression. This is CCR4-NOT transcription complex subunit 7 (CNOT7) from Gallus gallus (Chicken).